The following is a 383-amino-acid chain: Acetylornithine deacetylase (383 aa).

Position 80 (His80) interacts with Zn(2+). Asp82 is a catalytic residue. Asp112 serves as a coordination point for Zn(2+). Glu144 is a catalytic residue. The Zn(2+) site is built by Glu145, Glu169, and His355.

The protein belongs to the peptidase M20A family. ArgE subfamily. Homodimer. Zn(2+) serves as cofactor. Requires Co(2+) as cofactor. Glutathione is required as a cofactor.

It is found in the cytoplasm. It catalyses the reaction N(2)-acetyl-L-ornithine + H2O = L-ornithine + acetate. It functions in the pathway amino-acid biosynthesis; L-arginine biosynthesis; L-ornithine from N(2)-acetyl-L-ornithine (linear): step 1/1. Its function is as follows. Catalyzes the hydrolysis of the amide bond of N(2)-acetylated L-amino acids. Cleaves the acetyl group from N-acetyl-L-ornithine to form L-ornithine, an intermediate in L-arginine biosynthesis pathway, and a branchpoint in the synthesis of polyamines. The sequence is that of Acetylornithine deacetylase from Escherichia coli O157:H7.